The sequence spans 113 residues: Hydrogenase maturation factor HypA (113 aa).

A Ni(2+)-binding site is contributed by H2. C73, C76, C89, and C92 together coordinate Zn(2+).

Belongs to the HypA/HybF family.

Its function is as follows. Involved in the maturation of [NiFe] hydrogenases. Required for nickel insertion into the metal center of the hydrogenase. The polypeptide is Hydrogenase maturation factor HypA (Rhodopseudomonas palustris (strain BisB5)).